The primary structure comprises 363 residues: tRNA N6-adenosine threonylcarbamoyltransferase (363 aa).

Residues H127 and H131 each contribute to the Fe cation site. Substrate contacts are provided by residues 150 to 154, D183, G196, and N290; that span reads LISGG. Residue D318 coordinates Fe cation.

The protein belongs to the KAE1 / TsaD family. Requires Fe(2+) as cofactor.

Its subcellular location is the cytoplasm. It carries out the reaction L-threonylcarbamoyladenylate + adenosine(37) in tRNA = N(6)-L-threonylcarbamoyladenosine(37) in tRNA + AMP + H(+). Required for the formation of a threonylcarbamoyl group on adenosine at position 37 (t(6)A37) in tRNAs that read codons beginning with adenine. Is involved in the transfer of the threonylcarbamoyl moiety of threonylcarbamoyl-AMP (TC-AMP) to the N6 group of A37, together with TsaE and TsaB. TsaD likely plays a direct catalytic role in this reaction. This chain is tRNA N6-adenosine threonylcarbamoyltransferase, found in Zymomonas mobilis subsp. mobilis (strain ATCC 31821 / ZM4 / CP4).